The sequence spans 1840 residues: Collagen alpha-1(V) chain (1840 aa).

Residues methionine 1–alanine 30 form the signal peptide. Residues aspartate 72–cysteine 244 enclose the Laminin G-like domain. The tract at residues arginine 231–glutamate 445 is nonhelical region. Sulfotyrosine occurs at positions 234, 236, 240, 262, 263, 336, 338, and 344. Disordered regions lie at residues serine 241–glutamine 547 and glycine 561–glutamine 1576. Residues asparagine 258–glycine 268 show a composition bias toward acidic residues. Low complexity-rich tracts occupy residues aspartate 335–aspartate 352, proline 375–proline 387, and isoleucine 462–glycine 471. The interrupted collagenous region stretch occupies residues glycine 446–arginine 560. Residues proline 472 to threonine 487 are compositionally biased toward pro residues. Composition is skewed to low complexity over residues leucine 508–proline 525 and glycine 561–proline 572. Residues glycine 561–glycine 1572 form a triple-helical region region. Proline 572, proline 578, and proline 623 each carry 4-hydroxyproline. Lysine 629 is modified (5-hydroxylysine). The residue at position 641 (proline 641) is a 4-hydroxyproline. Residue lysine 644 is modified to 5-hydroxylysine. 4-hydroxyproline occurs at positions 650, 656, 659, 677, and 680. The segment covering proline 673–proline 688 has biased composition (low complexity). 2 positions are modified to 3-hydroxyproline: proline 682 and proline 688. A compositionally biased stretch (pro residues) spans lysine 689 to proline 698. 3 positions are modified to 4-hydroxyproline: proline 692, proline 698, and proline 707. Residue lysine 710 is modified to 5-hydroxylysine. 4-hydroxyproline is present on residues proline 719, proline 722, proline 728, and proline 734. Low complexity predominate over residues glutamine 724–proline 743. Lysine 746 carries the 5-hydroxylysine modification. The span at leucine 749–proline 758 shows a compositional bias: low complexity. 5 positions are modified to 4-hydroxyproline: proline 752, proline 758, proline 764, proline 767, and proline 773. Lysine 776 carries the 5-hydroxylysine modification. 2 positions are modified to 4-hydroxyproline: proline 782 and proline 791. Residues lysine 797, lysine 806, lysine 809, and lysine 812 each carry the 5-hydroxylysine modification. A 4-hydroxyproline modification is found at proline 818. Lysine 821 carries the post-translational modification 5-hydroxylysine. A 4-hydroxyproline modification is found at proline 836. Positions arginine 839–lysine 848 are enriched in basic and acidic residues. 5-hydroxylysine is present on residues lysine 848 and lysine 866. 3 positions are modified to 4-hydroxyproline: proline 872, proline 875, and proline 878. Lysine 884 carries the 5-hydroxylysine modification. Proline 890 and proline 893 each carry 4-hydroxyproline. Lysine 899 is subject to 5-hydroxylysine. Residues proline 905 and proline 908 each carry the 4-hydroxyproline modification. The segment covering proline 910 to proline 919 has biased composition (low complexity). 4-hydroxyproline is present on residues proline 932 and proline 947. Composition is skewed to low complexity over residues lysine 973–threonine 992 and valine 1001–methionine 1013. Proline 1019, proline 1022, proline 1025, and proline 1031 each carry 4-hydroxyproline. The span at serine 1090 to proline 1106 shows a compositional bias: low complexity. Pro residues predominate over residues arginine 1108 to proline 1117. Residues proline 1223 and proline 1226 each carry the 4-hydroxyproline modification. A compositionally biased stretch (low complexity) spans proline 1261–proline 1270. Positions glycine 1296–glycine 1305 are enriched in gly residues. Composition is skewed to pro residues over residues threonine 1382–alanine 1400 and serine 1456–leucine 1471. A 4-hydroxyproline mark is found at proline 1469 and proline 1472. The segment covering proline 1487–proline 1496 has biased composition (low complexity). Residues proline 1528 to proline 1543 are compositionally biased toward pro residues. Residues lysine 1544–lysine 1556 are compositionally biased toward low complexity. The nonhelical region stretch occupies residues glutamate 1573 to alanine 1607. Tyrosine 1603 and tyrosine 1606 each carry sulfotyrosine. The Fibrillar collagen NC1 domain maps to glutamate 1611–leucine 1839.

This sequence belongs to the fibrillar collagen family. In terms of assembly, trimers of two alpha 1(V) and one alpha 2(V) chains in most tissues and trimers of one alpha 1(V), one alpha 2(V), and one alpha 3(V) chains in placenta. Interacts with CSPG4. Post-translationally, prolines at the third position of the tripeptide repeating unit (G-X-Y) are hydroxylated in some or all of the chains. Sulfated on 40% of tyrosines. In terms of processing, hydroxylation on proline residues within the sequence motif, GXPG, is most likely to be 4-hydroxy as this fits the requirement for 4-hydroxylation in vertebrates. In terms of tissue distribution, a high molecular weight form was detected in Schwann cells and peripheral nerve. A lower, probably processed form, is detected in all other tissues tested (at protein level).

Its subcellular location is the secreted. It is found in the extracellular space. The protein localises to the extracellular matrix. Type V collagen is a member of group I collagen (fibrillar forming collagen). It is a minor connective tissue component of nearly ubiquitous distribution. Type V collagen binds to DNA, heparan sulfate, thrombospondin, heparin, and insulin. The protein is Collagen alpha-1(V) chain (Col5a1) of Rattus norvegicus (Rat).